Consider the following 432-residue polypeptide: T-box transcription factor T (432 aa).

A DNA-binding region (T-box) is located at residues 49–217 (LWTRFKELTN…HNPFAKAFLD (169 aa)). The tract at residues 274–306 (CERYSSLRNHRSAPYPSPYTHRNNSPNNLADNS) is disordered. The span at 293–306 (THRNNSPNNLADNS) shows a compositional bias: polar residues.

In terms of assembly, when not bound to DNA, exists as a monomer. Binds DNA as a dimer. As to expression, expressed in presumptive mesodermal cells around the blastopore, and then in the notochord.

Its subcellular location is the nucleus. Its function is as follows. Involved in the transcriptional regulation of genes required for mesoderm formation and differentiation. Binds to the palindromic T site 5'-TTCACACCTAGGTGTGAA-3' DNA sequence. Causes dorsal mesodermal differentiation of animal cap ectoderm when co-expressed with wnt8 and noggin. None of these molecules causes dorsal mesoderm formation when expressed alone. Establishes the left/right axis at early gastrula stage by directly up-regulating mesodermal expression of zic3. This is T-box transcription factor T from Xenopus laevis (African clawed frog).